The primary structure comprises 48 residues: Delta-stichotoxin-Hcr1e (48 aa).

3 cysteine pairs are disulfide-bonded: cysteine 3/cysteine 43, cysteine 5/cysteine 33, and cysteine 26/cysteine 44.

This sequence belongs to the sea anemone sodium channel inhibitory toxin family. Type II subfamily.

The protein localises to the secreted. Its subcellular location is the nematocyst. Its function is as follows. Binds to site 3 of voltage-gated sodium channels and inhibits the inactivation process. This chain is Delta-stichotoxin-Hcr1e, found in Radianthus crispa (Leathery sea anemone).